The primary structure comprises 469 residues: Glutamate--tRNA ligase 1 (469 aa).

A 'HIGH' region motif is present at residues 9–19 (PSPTGYLHVGG). Zn(2+) is bound by residues C98, C100, C125, and E127. Positions 236–240 (RLSKR) match the 'KMSKS' region motif. K239 lines the ATP pocket.

The protein belongs to the class-I aminoacyl-tRNA synthetase family. Glutamate--tRNA ligase type 1 subfamily. Monomer. It depends on Zn(2+) as a cofactor.

The protein resides in the cytoplasm. It catalyses the reaction tRNA(Glu) + L-glutamate + ATP = L-glutamyl-tRNA(Glu) + AMP + diphosphate. Its function is as follows. Catalyzes the attachment of glutamate to tRNA(Glu) in a two-step reaction: glutamate is first activated by ATP to form Glu-AMP and then transferred to the acceptor end of tRNA(Glu). The chain is Glutamate--tRNA ligase 1 from Nitrosococcus oceani (strain ATCC 19707 / BCRC 17464 / JCM 30415 / NCIMB 11848 / C-107).